Reading from the N-terminus, the 256-residue chain is Isoprenyl transferase (256 aa).

The active site involves aspartate 33. Aspartate 33 serves as a coordination point for Mg(2+). Substrate is bound by residues 34–37 (GNGR), tryptophan 38, arginine 46, histidine 50, and 78–80 (STE). Asparagine 81 acts as the Proton acceptor in catalysis. Substrate-binding positions include tryptophan 82, arginine 84, arginine 201, and 207–209 (RIS). Glutamate 220 provides a ligand contact to Mg(2+).

This sequence belongs to the UPP synthase family. In terms of assembly, homodimer. The cofactor is Mg(2+).

Functionally, catalyzes the condensation of isopentenyl diphosphate (IPP) with allylic pyrophosphates generating different type of terpenoids. The sequence is that of Isoprenyl transferase from Staphylococcus epidermidis (strain ATCC 35984 / DSM 28319 / BCRC 17069 / CCUG 31568 / BM 3577 / RP62A).